The primary structure comprises 468 residues: Glutamate--tRNA ligase (468 aa).

Positions Pro-11 to Asn-21 match the 'HIGH' region motif. The 'KMSKS' region motif lies at Lys-243 to Arg-247. Position 246 (Lys-246) interacts with ATP.

It belongs to the class-I aminoacyl-tRNA synthetase family. Glutamate--tRNA ligase type 1 subfamily. As to quaternary structure, monomer.

The protein resides in the cytoplasm. It catalyses the reaction tRNA(Glu) + L-glutamate + ATP = L-glutamyl-tRNA(Glu) + AMP + diphosphate. In terms of biological role, catalyzes the attachment of glutamate to tRNA(Glu) in a two-step reaction: glutamate is first activated by ATP to form Glu-AMP and then transferred to the acceptor end of tRNA(Glu). In Delftia acidovorans (strain DSM 14801 / SPH-1), this protein is Glutamate--tRNA ligase.